The primary structure comprises 281 residues: MVEQLLLPLWNSLATVDDETLPLMSTALLIARDEYPDLDANLYDTLVQSYVEYLRSEVEEISLWPLKMAAVNRYLFQKLGYSGNHDEYYDPRNSYLNQVFERRLGNPISLAVIQIEVARRLGIPLDGVSFPGHFLVRLPVDDGILVMDPFNGGRPLDAEELRERVRPHLGGEVPDDRALAQILNPAPHRTILVRILRNLHSVYANTNRWDRAARCADRILKLVPNQPEALRDRGLAYLQLGHRSGARNDLTRYLQLYPSTHNVDMVRGHLVDLSNERIQTH.

TPR repeat units follow at residues 193 to 226 and 227 to 260; these read VRIL…VPNQ and PEAL…YPST.

This sequence belongs to the UPF0162 family.

The polypeptide is UPF0162 protein XF_1494 (Xylella fastidiosa (strain 9a5c)).